The primary structure comprises 429 residues: Probable proton-coupled zinc antiporter SLC30A4 (429 aa).

The Cytoplasmic portion of the chain corresponds to 1 to 113 (MAGSGAWKRL…ILKQRKVKAR (113 aa)). A helical membrane pass occupies residues 114-134 (LTIAAVLYLLFMIGELVGGYI). Topologically, residues 135-143 (ANSLAIMTD) are lumenal. The helical transmembrane segment at 144–164 (ALHMLTDLSAIILTLLALWLS) threads the bilayer. Zn(2+)-binding residues include histidine 146 and aspartate 150. The Cytoplasmic portion of the chain corresponds to 165–178 (SKSPTKRFTFGFHR). A helical membrane pass occupies residues 179–199 (LEVLSAMISVLLVYILMGFLL). The Lumenal portion of the chain corresponds to 200–216 (YEAVQRTIHMNYEINGD). Residues 217–237 (IMLITAAVGVAVNVIMGFLLN) traverse the membrane as a helical segment. At 238-274 (QSGHRHSHSHSLPSNSPTRGSGCERNHGQDSLAVRAA) the chain is on the cytoplasmic side. A zinc binding region spans residues 240-264 (GHRHSHSHSLPSNSPTRGSGCERNH). Residues 275-295 (FVHALGDLVQSVGVLIAAYII) form a helical membrane-spanning segment. Zn(2+) is bound by residues histidine 277 and aspartate 281. Residues 296–310 (RFKPEYKIADPICTY) are Lumenal-facing. Residues 311–331 (VFSLLVAFTTFRIIWDTVVII) form a helical membrane-spanning segment. At 332–429 (LEGVPSHLNV…TCANCQSSSP (98 aa)) the chain is on the cytoplasmic side.

This sequence belongs to the cation diffusion facilitator (CDF) transporter (TC 2.A.4) family. SLC30A subfamily. As to quaternary structure, homodimer; dityrosine-linked. Homodimerization could be specific of the human protein and enhances the zinc transport efficiency. Interacts with TMEM163. Post-translationally, homodimerization through dityrosine bonds is stimulated by oxidative stress.

It localises to the endosome membrane. The protein localises to the late endosome membrane. Its subcellular location is the lysosome membrane. It catalyses the reaction Zn(2+)(in) + 2 H(+)(out) = Zn(2+)(out) + 2 H(+)(in). Its function is as follows. Probable proton-coupled zinc ion antiporter mediating zinc import from cytoplasm potentially into the endocytic compartment. Controls zinc deposition in milk. This Homo sapiens (Human) protein is Probable proton-coupled zinc antiporter SLC30A4.